Consider the following 169-residue polypeptide: Probable phospholipid hydroperoxide glutathione peroxidase (169 aa).

Cys43 is a catalytic residue.

It belongs to the glutathione peroxidase family. In terms of tissue distribution, germinating seed, apex, flower, as well as in stressed tissues.

Its subcellular location is the cytoplasm. The enzyme catalyses a hydroperoxy polyunsaturated fatty acid + 2 glutathione = a hydroxy polyunsaturated fatty acid + glutathione disulfide + H2O. Protects cells and enzymes from oxidative damage, by catalyzing the reduction of hydrogen peroxide, lipid peroxides and organic hydroperoxide, by glutathione. The protein is Probable phospholipid hydroperoxide glutathione peroxidase of Nicotiana sylvestris (Wood tobacco).